We begin with the raw amino-acid sequence, 248 residues long: Probable transcriptional regulatory protein Rsph17025_0577 (248 aa).

Positions 1–21 (MAGHSKWANIQHRKGKQDKLR) are disordered.

The protein belongs to the TACO1 family.

Its subcellular location is the cytoplasm. This Cereibacter sphaeroides (strain ATCC 17025 / ATH 2.4.3) (Rhodobacter sphaeroides) protein is Probable transcriptional regulatory protein Rsph17025_0577.